We begin with the raw amino-acid sequence, 372 residues long: Ciliary neurotrophic factor receptor subunit alpha (372 aa).

The N-terminal stretch at 1–22 is a signal peptide; the sequence is MAAPVPWACCAVLAAAAAVVYA. The 78-residue stretch at 27-104 folds into the Ig-like C2-type domain; that stretch reads PQEAPHVQYE…WHLRHQVLLH (78 aa). A disulfide bridge connects residues Cys-46 and Cys-89. N-linked (GlcNAc...) asparagine glycosylation is found at Asn-60, Asn-70, Asn-142, and Asn-190. Fibronectin type-III domains follow at residues 108–205 and 206–306; these read PPRE…VKPD and PPEN…TEEP. Residues 290–294 carry the WSXWS motif motif; sequence WSDWS. Residues 301 to 340 form a disordered region; that stretch reads PWTEEPRHLTTEAQAAETTTSTTSSLAPPPTTKICDPGEL. A compositionally biased stretch (low complexity) spans 311-326; it reads TEAQAAETTTSTTSSL. Ser-342 is lipidated: GPI-anchor amidated serine. Positions 343–372 are cleaved as a propeptide — removed in mature form; it reads GGGPSAPFLVSVPITLALAAAAATASSLLI.

Belongs to the type I cytokine receptor family. Type 3 subfamily. Forms a heterotrimer with LIFR and IL6ST. Interacts with heterodimeric neurotropic cytokine composed of CLCF1/CLC and CRLF1/CLF-1. Either alone or in complex with the heterodimer CLCF1-CRLF1 interacts with SORL1; this interaction may promote internalization and lysosomal degradation. Component of a receptor complex composed of IL6ST/GP130, IL27RA/WSX1 and CNTFR which interacts with the neuroprotective peptide humanin. Nervous system and skeletal muscle.

It localises to the cell membrane. Its function is as follows. Binds to CNTF. The alpha subunit provides the receptor specificity. Receptor for heterodimeric neurotropic cytokine composed of CLCF1/CLC and CRLF1/CLF-1. Acts as a receptor for the neuroprotective peptide humanin as part of a complex with IL6ST/GP130 and IL27RA/WSX1. The chain is Ciliary neurotrophic factor receptor subunit alpha (CNTFR) from Homo sapiens (Human).